The chain runs to 292 residues: MEVQSLTITTNYPPKPASPNPQDIRDTIRSNKTNENLWIQRKDVDTTLRSALEHLKACCIVLNLSAKCDERLNVAVSHGTTEKYQLMSRTGSSDNLKAAVTLLDDNVIQAEVTVKYPKAGGGYYRAVAQPDVQWKLQQLQDLGNHISRVTITLCDLQHEVNLLKGDGERDAFTLATGARILEELKLTMNEISLARNSIMLPRKRSLLELCYFPPTRKFVPPLPQDQLISFYISCCRLVCASYQMVPKTVHPQGLSVFMAESQLPHLDDVIKHLNTVMAILQKLINYLSATMS.

Residues 1–12 (MEVQSLTITTNY) are compositionally biased toward polar residues. The disordered stretch occupies residues 1–25 (MEVQSLTITTNYPPKPASPNPQDIR).

It belongs to the rogdi family.

The protein resides in the nucleus envelope. This chain is Protein rogdi homolog, found in Caenorhabditis elegans.